The chain runs to 395 residues: MNKKTLKDLNVENKRVLVRVDFNVPIKEGIITDTNRIEASLTTIKYLIDNNAKVILMSHLGRPKGEPKPEFSLKPVAQKLSEMIGQDVKFIDSDKVVDDSVIEESKKLQPKEIMLIQNTRFRKEEEKNDQTFSKELSQLADLYVNDAFGTSHRAHASNVGVSKFLPSAVGFLVQKEIEIMGKALENPERPFTAILGGAKVSDKIGVIENLLDKVDTILIGGAMAFTFIKSQGKNVGKSLIEEDKLDLAKSLLEKAQEKGVKIFLPVDFVVAKEMTEESDSKVINIDDFTDDIAGFDIGTKTIKIFDEEIQKSKTIVWNGPMGVFEIEQFSKGTFEIANSLVKSKAITIVGGGDSASAIAKSGNKDKVTHVSTGGGASLEFLEGKVLPGIDCIDER.

Residues aspartate 21–asparagine 23, arginine 36, histidine 59–arginine 62, arginine 120, and arginine 153 contribute to the substrate site. Residues lysine 203, glycine 294, glutamate 325, and glycine 351–serine 354 contribute to the ATP site.

This sequence belongs to the phosphoglycerate kinase family. Monomer.

It localises to the cytoplasm. It carries out the reaction (2R)-3-phosphoglycerate + ATP = (2R)-3-phospho-glyceroyl phosphate + ADP. The protein operates within carbohydrate degradation; glycolysis; pyruvate from D-glyceraldehyde 3-phosphate: step 2/5. The polypeptide is Phosphoglycerate kinase (Finegoldia magna (strain ATCC 29328 / DSM 20472 / WAL 2508) (Peptostreptococcus magnus)).